A 149-amino-acid polypeptide reads, in one-letter code: Large ribosomal subunit protein uL22c (149 aa).

This sequence belongs to the universal ribosomal protein uL22 family. In terms of assembly, part of the 50S ribosomal subunit.

Its subcellular location is the plastid. The protein localises to the chloroplast. In terms of biological role, this protein binds specifically to 23S rRNA. Its function is as follows. The globular domain of the protein is located near the polypeptide exit tunnel on the outside of the subunit, while an extended beta-hairpin is found that lines the wall of the exit tunnel in the center of the 70S ribosome. The chain is Large ribosomal subunit protein uL22c (rpl22) from Hordeum vulgare (Barley).